We begin with the raw amino-acid sequence, 197 residues long: Nucleoid occlusion factor SlmA (197 aa).

An HTH tetR-type domain is found at 7–67 (INRREHILQC…GLIEFIEESL (61 aa)). Positions 30 to 49 (TTAKLASEVGVSEAALYRHF) form a DNA-binding region, H-T-H motif.

Belongs to the nucleoid occlusion factor SlmA family. Homodimer. Interacts with FtsZ.

The protein localises to the cytoplasm. It localises to the nucleoid. In terms of biological role, required for nucleoid occlusion (NO) phenomenon, which prevents Z-ring formation and cell division over the nucleoid. Acts as a DNA-associated cell division inhibitor that binds simultaneously chromosomal DNA and FtsZ, and disrupts the assembly of FtsZ polymers. SlmA-DNA-binding sequences (SBS) are dispersed on non-Ter regions of the chromosome, preventing FtsZ polymerization at these regions. This is Nucleoid occlusion factor SlmA from Shewanella sp. (strain MR-7).